Here is a 324-residue protein sequence, read N- to C-terminus: Quinolinate synthase (324 aa).

Iminosuccinate-binding residues include histidine 39 and serine 56. Cysteine 101 is a [4Fe-4S] cluster binding site. Iminosuccinate is bound by residues 127 to 129 (YIN) and serine 144. Position 187 (cysteine 187) interacts with [4Fe-4S] cluster. Iminosuccinate-binding positions include 213–215 (HPE) and threonine 230. Residue cysteine 280 coordinates [4Fe-4S] cluster.

This sequence belongs to the quinolinate synthase family. Type 2 subfamily. [4Fe-4S] cluster serves as cofactor.

It localises to the cytoplasm. The enzyme catalyses iminosuccinate + dihydroxyacetone phosphate = quinolinate + phosphate + 2 H2O + H(+). The protein operates within cofactor biosynthesis; NAD(+) biosynthesis; quinolinate from iminoaspartate: step 1/1. Catalyzes the condensation of iminoaspartate with dihydroxyacetone phosphate to form quinolinate. This is Quinolinate synthase from Nostoc sp. (strain PCC 7120 / SAG 25.82 / UTEX 2576).